The following is a 592-amino-acid chain: Aspartate--tRNA(Asp/Asn) ligase (592 aa).

Glu172 lines the L-aspartate pocket. Residues 196–199 are aspartate; it reads QLFK. Arg218 contributes to the L-aspartate binding site. ATP-binding positions include 218-220 and Gln227; that span reads RDE. Position 450 (His450) interacts with L-aspartate. ATP is bound at residue Glu484. Arg491 provides a ligand contact to L-aspartate. ATP is bound at residue 536 to 539; sequence GLDR.

This sequence belongs to the class-II aminoacyl-tRNA synthetase family. Type 1 subfamily. As to quaternary structure, homodimer.

Its subcellular location is the cytoplasm. It catalyses the reaction tRNA(Asx) + L-aspartate + ATP = L-aspartyl-tRNA(Asx) + AMP + diphosphate. Aspartyl-tRNA synthetase with relaxed tRNA specificity since it is able to aspartylate not only its cognate tRNA(Asp) but also tRNA(Asn). Reaction proceeds in two steps: L-aspartate is first activated by ATP to form Asp-AMP and then transferred to the acceptor end of tRNA(Asp/Asn). The chain is Aspartate--tRNA(Asp/Asn) ligase from Thioalkalivibrio sulfidiphilus (strain HL-EbGR7).